The sequence spans 27 residues: Flagellar filament 31.5 kDa core protein (27 aa).

Belongs to the bacterial flagellin family. The flagellum consists of an outer layer composed of repeating units of FlaA around a core that contains one or all of five antigenically related polypeptides.

The protein resides in the periplasmic flagellum. The protein localises to the periplasm. Functionally, component of the core of the flagella. The protein is Flagellar filament 31.5 kDa core protein of Spirochaeta aurantia.